Reading from the N-terminus, the 506-residue chain is AMP phosphorylase (506 aa).

AMP-binding positions include glycine 167, 193–198 (SRAITG), and threonine 202. The active-site Proton donor is the aspartate 255. Positions 263 and 287 each coordinate AMP.

This sequence belongs to the thymidine/pyrimidine-nucleoside phosphorylase family. Type 2 subfamily.

It catalyses the reaction AMP + phosphate = alpha-D-ribose 1,5-bisphosphate + adenine. The enzyme catalyses CMP + phosphate = cytosine + alpha-D-ribose 1,5-bisphosphate. It carries out the reaction UMP + phosphate = alpha-D-ribose 1,5-bisphosphate + uracil. Catalyzes the conversion of AMP and phosphate to adenine and ribose 1,5-bisphosphate (R15P). Exhibits phosphorylase activity toward CMP and UMP in addition to AMP. Functions in an archaeal AMP degradation pathway, together with R15P isomerase and RubisCO. The chain is AMP phosphorylase from Methanosarcina barkeri (strain Fusaro / DSM 804).